The following is a 351-amino-acid chain: (S)-coclaurine N-methyltransferase (351 aa).

Residues 91-92 (QS), 126-134 (VLDLGCGLG), 130-132 (GCG), and 153-158 (TSSVEQ) contribute to the S-adenosyl-L-methionine site. Cys-326 is a catalytic residue.

It belongs to the CFA/CMAS family. As to expression, expressed in roots, stems, flower buds and at lower levels, in leaves. Restricted to sieve elements of the phloem adjacent or proximal to laticifers.

It localises to the cytoplasm. The enzyme catalyses (S)-coclaurine + S-adenosyl-L-methionine = (S)-N-methylcoclaurine + S-adenosyl-L-homocysteine + H(+). Its pathway is alkaloid biosynthesis; (S)-reticuline biosynthesis; (S)-reticuline from (S)-norcoclaurine: step 2/4. Its function is as follows. Involved in the biosynthesis of benzylisoquinoline alkaloids. N-methyltransferase methylating (S)-coclaurine. 4'-O-methylcoclaurine and norlaudanine can also be used as substrates. This Papaver somniferum (Opium poppy) protein is (S)-coclaurine N-methyltransferase.